Consider the following 718-residue polypeptide: MSASDLHPVQAGAPQGRRQILVTSALPYANGQIHIGHLVEYIQTDIWARTMRMHGHEIYYIGADDTHGTPVMLRAEQEGVSPKQLIERVWREHKRDFDSFGVSFDNFYTTDSDENRVLSEKIYLALKEAGFIAEREIEQAYDPVKQMFLPDRFIKGECPKCHAKDQYGDSCEVCGTTYQPTDLVNPYSVVSGATPVRKTSTHHFFRLSDPRCEAFLREWVSGLAQPEATNKMREWLGDAGEAKLADWDISRDAPYFGFEIPGAPGKYFYVWLDAPVGYYASFKNLCERRGLDFDAWISKDSTTEQYHFIGKDILYFHTLFWPAMLEFSGHRTPTNVFAHGFLTVDGAKMSKSRGTFITAQSYIDAGLNPEWLRYYFAAKLNATMEDIDLNLEDFQARVNSDLVGKYVNIASRAAGFLIKRFDGRVQASATNHPLLVTLRDAIPQIAAHYEAREYGRALRQTMELADAVNGYVDTAKPWELAKDPANAVALHETCTVSLEAFRLLSLALKPVLPRVAEGVEAFLGIAPLTWADANKPLSSEQPIRAYQHLMTRVDPKQIDALLAANRSSLQGAAAADAAGATNGNGAKAAKSAKAANAASADDEASPFISIDDFAKIDLRIAKIVACQAVEGSDKLLQLTLDVGEEKTRNVFSGIKSAYQPEQLVGKLTVMVANLAPRKMKFGLSEGMVLAASAADEKAEPGLYILEPHSGAKPGMRVK.

The 'HIGH' region motif lies at 27-37; that stretch reads PYANGQIHIGH. Cysteine 158, cysteine 161, cysteine 171, and cysteine 174 together coordinate Zn(2+). The 'KMSKS' region signature appears at 348–352; that stretch reads KMSKS. Residue lysine 351 coordinates ATP. The tRNA-binding domain maps to 612–718; sequence DFAKIDLRIA…SGAKPGMRVK (107 aa).

The protein belongs to the class-I aminoacyl-tRNA synthetase family. MetG type 1 subfamily. As to quaternary structure, homodimer. Zn(2+) is required as a cofactor.

The protein localises to the cytoplasm. The enzyme catalyses tRNA(Met) + L-methionine + ATP = L-methionyl-tRNA(Met) + AMP + diphosphate. Its function is as follows. Is required not only for elongation of protein synthesis but also for the initiation of all mRNA translation through initiator tRNA(fMet) aminoacylation. The chain is Methionine--tRNA ligase from Burkholderia thailandensis (strain ATCC 700388 / DSM 13276 / CCUG 48851 / CIP 106301 / E264).